Consider the following 349-residue polypeptide: tRNA pseudouridine synthase D (349 aa).

Phe-27 provides a ligand contact to substrate. Asp-80 functions as the Nucleophile in the catalytic mechanism. Residue Asn-129 participates in substrate binding. Residues 155-303 form the TRUD domain; sequence GVPNYFGAQR…VEAARRAMLL (149 aa). Phe-329 contacts substrate.

It belongs to the pseudouridine synthase TruD family.

The enzyme catalyses uridine(13) in tRNA = pseudouridine(13) in tRNA. Functionally, responsible for synthesis of pseudouridine from uracil-13 in transfer RNAs. This Klebsiella pneumoniae subsp. pneumoniae (strain ATCC 700721 / MGH 78578) protein is tRNA pseudouridine synthase D.